A 309-amino-acid chain; its full sequence is MADLQAILDSIHTDILPRIGEGKVADYIPELAKVDPRQFGMAIVTVDGKVYRVGDADIAFSIQSISKVFMLTLALGKVGESLWKRVGREPSGSAFNSIVQLEHEGGIPRNPFINAGAIAVSDVVMAGHAPREAIGELLRFVRYLADDESITIDDKVARSETQTGYRNVALANFMRAYRNLDHPVDHVLGVYFHQCALSMSCEQLARAGLFLAARGSNPMTGHSVVSPKRARRINALMLTCGHYDGSGDFAYHVGLPGKSGVGGGIFAVAPGIASIAVWSPGLNKVGNSQLGAVALEMLAARTGWSVFGD.

Substrate-binding residues include serine 64, asparagine 114, glutamate 160, asparagine 167, tyrosine 191, tyrosine 243, and valine 261.

The protein belongs to the glutaminase family. As to quaternary structure, homotetramer.

It carries out the reaction L-glutamine + H2O = L-glutamate + NH4(+). The chain is Glutaminase from Rhizobium leguminosarum bv. trifolii (strain WSM2304).